Reading from the N-terminus, the 150-residue chain is Large ribosomal subunit protein bL9 (150 aa).

The protein belongs to the bacterial ribosomal protein bL9 family.

Functionally, binds to the 23S rRNA. The sequence is that of Large ribosomal subunit protein bL9 from Shewanella loihica (strain ATCC BAA-1088 / PV-4).